The sequence spans 235 residues: Leucyl/phenylalanyl-tRNA--protein transferase (235 aa).

It belongs to the L/F-transferase family.

It localises to the cytoplasm. The catalysed reaction is N-terminal L-lysyl-[protein] + L-leucyl-tRNA(Leu) = N-terminal L-leucyl-L-lysyl-[protein] + tRNA(Leu) + H(+). The enzyme catalyses N-terminal L-arginyl-[protein] + L-leucyl-tRNA(Leu) = N-terminal L-leucyl-L-arginyl-[protein] + tRNA(Leu) + H(+). It catalyses the reaction L-phenylalanyl-tRNA(Phe) + an N-terminal L-alpha-aminoacyl-[protein] = an N-terminal L-phenylalanyl-L-alpha-aminoacyl-[protein] + tRNA(Phe). Its function is as follows. Functions in the N-end rule pathway of protein degradation where it conjugates Leu, Phe and, less efficiently, Met from aminoacyl-tRNAs to the N-termini of proteins containing an N-terminal arginine or lysine. This chain is Leucyl/phenylalanyl-tRNA--protein transferase, found in Cellvibrio japonicus (strain Ueda107) (Pseudomonas fluorescens subsp. cellulosa).